The following is a 351-amino-acid chain: MNTLFLHCRPGFEGEVCAEITDLAARLDVPGYSKAKPGSACAEFVCSEAADGERMMRSVRFNSLIFPRQWARGGFVMLPESDRISVLLDALADYPVCGSLWLEVVDTNDGKELSTFCKKFEAPLRKALLKAGKLVDDARKPRLLLTFKSGREVFAGIAEADNQAMWPMGIPRLKFPREAPSRSTLKLEEAWHHFIPREQWDQRLAPGMTAVDLGAAPGGWTWQLVNREIRVTAVDNGPMAESLMYSGFVVHQRADGFTFRPRHPVHWMVCDIVEKPARTAAMIETWLGEGLCREAVVNLKLPMKQRYAEVRRLLDRIESGLAERGLKVSIGCKQLYHDREEVTCHLRRHGK.

S-adenosyl-L-methionine-binding positions include S183, 216–219, D235, D255, and D271; that span reads APGG. Residue K300 is the Proton acceptor of the active site.

The protein belongs to the class I-like SAM-binding methyltransferase superfamily. RNA methyltransferase RlmE family. RlmM subfamily. As to quaternary structure, monomer.

Its subcellular location is the cytoplasm. It catalyses the reaction cytidine(2498) in 23S rRNA + S-adenosyl-L-methionine = 2'-O-methylcytidine(2498) in 23S rRNA + S-adenosyl-L-homocysteine + H(+). Catalyzes the 2'-O-methylation at nucleotide C2498 in 23S rRNA. In Ectopseudomonas mendocina (strain ymp) (Pseudomonas mendocina), this protein is Ribosomal RNA large subunit methyltransferase M.